The sequence spans 449 residues: MGKYFGTDGIRGVAGEDLTVELAYKLARAACYKLKDVDNKLIVIGKDTRISGDMLEAALISGITSMGFDVYRLGVIPTPAVAYLTRFYNACCGIVISASHNPYEFNGIKYFSNEGFKLKDSLEEEIEYLIDHQDEIDLKVTGEKVGRVYEEECARDTYINYLLSRVDLDLTGVKVSLDCGYGATSEIAPIIFNRLNADVTVTNTEYDGKNINFKCGSTNPEVISNLVKISESDMGFSFDGDGDRLIACDETGEIMDGDHVICAVGHFLKENNKLKNNAVVGTVMTNIGLIKSLKEIGVDVIKTQVGDRYVLEEMRKNGYIIGGEQSGHIIFIEDNTTGDGILSAIKLAEIAVKSKQKLSEMNNLMTSFPQVLVNAKVNNEYKKVYKDDEVINQKIAELEHEFKDEGRVLIRPSGTEPLIRVMIEGENQEYLEKKAIELKDLIEERCELI.

Catalysis depends on Ser99, which acts as the Phosphoserine intermediate. Ser99, Asp239, Asp241, and Asp243 together coordinate Mg(2+). Ser99 carries the post-translational modification Phosphoserine.

Belongs to the phosphohexose mutase family. Mg(2+) is required as a cofactor. Activated by phosphorylation.

The enzyme catalyses alpha-D-glucosamine 1-phosphate = D-glucosamine 6-phosphate. Functionally, catalyzes the conversion of glucosamine-6-phosphate to glucosamine-1-phosphate. The chain is Phosphoglucosamine mutase from Finegoldia magna (strain ATCC 29328 / DSM 20472 / WAL 2508) (Peptostreptococcus magnus).